A 327-amino-acid polypeptide reads, in one-letter code: Alkene monooxygenase system, ferredoxin--NAD(+) reductase component (327 aa).

One can recognise a 2Fe-2S ferredoxin-type domain in the interval methionine 1 to aspartate 89. Residues cysteine 32, cysteine 37, cysteine 40, and cysteine 73 each coordinate [2Fe-2S] cluster. Residues proline 96–arginine 194 form the FAD-binding FR-type domain.

The protein belongs to the bacterial ring-hydroxylating dioxygenase ferredoxin reductase family. Monomer. The alkene monooxygenase multicomponent enzyme system is composed of an electron transfer component and a monooxygenase component interacting with the effector protein XamoD. The electron transfer component is composed of a ferredoxin reductase (XamoF) and a ferredoxin (XamoC), and the monooxygenase component is formed by a heterohexamer (dimer of heterotrimers) of two alpha subunits (XamoA), two beta subunits (XamoE) and two gamma subunits (XamoB). The cofactor is FAD. [2Fe-2S] cluster is required as a cofactor.

It is found in the cytoplasm. It carries out the reaction 2 reduced [2Fe-2S]-[ferredoxin] + NAD(+) + H(+) = 2 oxidized [2Fe-2S]-[ferredoxin] + NADH. In terms of biological role, reductase component of the alkene monooxygenase multicomponent enzyme system which catalyzes the O2- and NADH-dependent epoxidation of short chain (C2 to C6) alkenes to their corresponding epoxides. Ferredoxin reductase catalyzes the transfer of electrons from NADH to ferredoxin (XamoC). NADPH is also effective but with a rate approximately 3-fold lower than with NADH. The protein is Alkene monooxygenase system, ferredoxin--NAD(+) reductase component of Xanthobacter autotrophicus (strain ATCC BAA-1158 / Py2).